Consider the following 209-residue polypeptide: Imidazole glycerol phosphate synthase subunit HisH (209 aa).

In terms of domain architecture, Glutamine amidotransferase type-1 spans 3–209; the sequence is KIGLIDYGMG…WINWLKKNKF (207 aa). Catalysis depends on Cys81, which acts as the Nucleophile. Residues His185 and Glu187 contribute to the active site.

As to quaternary structure, heterodimer of HisH and HisF.

It is found in the cytoplasm. It catalyses the reaction 5-[(5-phospho-1-deoxy-D-ribulos-1-ylimino)methylamino]-1-(5-phospho-beta-D-ribosyl)imidazole-4-carboxamide + L-glutamine = D-erythro-1-(imidazol-4-yl)glycerol 3-phosphate + 5-amino-1-(5-phospho-beta-D-ribosyl)imidazole-4-carboxamide + L-glutamate + H(+). The catalysed reaction is L-glutamine + H2O = L-glutamate + NH4(+). The protein operates within amino-acid biosynthesis; L-histidine biosynthesis; L-histidine from 5-phospho-alpha-D-ribose 1-diphosphate: step 5/9. In terms of biological role, IGPS catalyzes the conversion of PRFAR and glutamine to IGP, AICAR and glutamate. The HisH subunit catalyzes the hydrolysis of glutamine to glutamate and ammonia as part of the synthesis of IGP and AICAR. The resulting ammonia molecule is channeled to the active site of HisF. The polypeptide is Imidazole glycerol phosphate synthase subunit HisH (Prochlorococcus marinus (strain NATL2A)).